Reading from the N-terminus, the 192-residue chain is Potassium-transporting ATPase KdpC subunit (192 aa).

Residues 7 to 27 (PLIVLFVVLAALTGLAYPAVM) traverse the membrane as a helical segment.

It belongs to the KdpC family. The system is composed of three essential subunits: KdpA, KdpB and KdpC.

The protein resides in the cell inner membrane. Part of the high-affinity ATP-driven potassium transport (or Kdp) system, which catalyzes the hydrolysis of ATP coupled with the electrogenic transport of potassium into the cytoplasm. This subunit acts as a catalytic chaperone that increases the ATP-binding affinity of the ATP-hydrolyzing subunit KdpB by the formation of a transient KdpB/KdpC/ATP ternary complex. In Paraburkholderia xenovorans (strain LB400), this protein is Potassium-transporting ATPase KdpC subunit.